The chain runs to 108 residues: Peptidyl-prolyl cis-trans isomerase FKBP1A (108 aa).

The 89-residue stretch at 20–108 (GQTCVVHYTG…VFDVELLKLE (89 aa)) folds into the PPIase FKBP-type domain. Position 53 is an N6-acetyllysine; alternate (Lys53). At Lys53 the chain carries N6-succinyllysine; alternate.

Belongs to the FKBP-type PPIase family. FKBP1 subfamily. In terms of assembly, interacts with TGFBR1; prevents TGFBR1 phosphorylation by TGFBR2 and stabilizes it in the inactive conformation. Interacts with ACVR1B and SMAD7. Identified in a complex composed of RYR1, PDE4D, PKA, FKBP1A and protein phosphatase 1 (PP1). Interacts directly with RYR2 and RYR3. Interacts directly with RYR1. Interacts with GLMN; rapamycin and FK506 abolish the interaction with GLMN in a dose dependent manner.

The protein resides in the cytoplasm. Its subcellular location is the cytosol. It localises to the sarcoplasmic reticulum membrane. The enzyme catalyses [protein]-peptidylproline (omega=180) = [protein]-peptidylproline (omega=0). With respect to regulation, inhibited by both FK506 and rapamycin. Its function is as follows. Keeps in an inactive conformation TGFBR1, the TGF-beta type I serine/threonine kinase receptor, preventing TGF-beta receptor activation in absence of ligand. Recruits SMAD7 to ACVR1B which prevents the association of SMAD2 and SMAD3 with the activin receptor complex, thereby blocking the activin signal. May modulate the RYR1 calcium channel activity. PPIases accelerate the folding of proteins. It catalyzes the cis-trans isomerization of proline imidic peptide bonds in oligopeptides. In Mus musculus (Mouse), this protein is Peptidyl-prolyl cis-trans isomerase FKBP1A (Fkbp1a).